Consider the following 214-residue polypeptide: Probable transaldolase (214 aa).

Residue Lys83 is the Schiff-base intermediate with substrate of the active site.

Belongs to the transaldolase family. Type 3B subfamily.

The protein resides in the cytoplasm. It catalyses the reaction D-sedoheptulose 7-phosphate + D-glyceraldehyde 3-phosphate = D-erythrose 4-phosphate + beta-D-fructose 6-phosphate. It participates in carbohydrate degradation; pentose phosphate pathway; D-glyceraldehyde 3-phosphate and beta-D-fructose 6-phosphate from D-ribose 5-phosphate and D-xylulose 5-phosphate (non-oxidative stage): step 2/3. Transaldolase is important for the balance of metabolites in the pentose-phosphate pathway. The protein is Probable transaldolase of Streptococcus equi subsp. zooepidemicus (strain H70).